Reading from the N-terminus, the 1386-residue chain is DNA-directed RNA polymerase subunit beta' (1386 aa).

Residues Cys-75, Cys-77, Cys-90, and Cys-93 each coordinate Zn(2+). Residues Asp-466, Asp-468, and Asp-470 each coordinate Mg(2+). Positions 809, 883, 890, and 893 each coordinate Zn(2+).

Belongs to the RNA polymerase beta' chain family. The RNAP catalytic core consists of 2 alpha, 1 beta, 1 beta' and 1 omega subunit. When a sigma factor is associated with the core the holoenzyme is formed, which can initiate transcription. Mg(2+) serves as cofactor. It depends on Zn(2+) as a cofactor.

It carries out the reaction RNA(n) + a ribonucleoside 5'-triphosphate = RNA(n+1) + diphosphate. Functionally, DNA-dependent RNA polymerase catalyzes the transcription of DNA into RNA using the four ribonucleoside triphosphates as substrates. The protein is DNA-directed RNA polymerase subunit beta' of Oleidesulfovibrio alaskensis (strain ATCC BAA-1058 / DSM 17464 / G20) (Desulfovibrio alaskensis).